The sequence spans 379 residues: Glutamate 5-kinase (379 aa).

Lysine 19 provides a ligand contact to ATP. Residues serine 59, aspartate 146, and asparagine 158 each coordinate substrate. Residues 178–179 and 220–226 each bind ATP; these read TD and TGGMATK. One can recognise a PUA domain in the interval 285–363; the sequence is SGDIIIDDGA…KDIISILGHD (79 aa).

The protein belongs to the glutamate 5-kinase family.

The protein localises to the cytoplasm. The enzyme catalyses L-glutamate + ATP = L-glutamyl 5-phosphate + ADP. Its pathway is amino-acid biosynthesis; L-proline biosynthesis; L-glutamate 5-semialdehyde from L-glutamate: step 1/2. In terms of biological role, catalyzes the transfer of a phosphate group to glutamate to form L-glutamate 5-phosphate. The chain is Glutamate 5-kinase from Vibrio campbellii (strain ATCC BAA-1116).